We begin with the raw amino-acid sequence, 319 residues long: HTH-type transcriptional regulator YidZ (319 aa).

The HTH lysR-type domain maps to 8–65 (LDLNLLLCLQLLMQERSVTKAAKRMNVTPSAVSKSLAKLRAWFDDPLFVNTPLGLAPT). Positions 25–44 (VTKAAKRMNVTPSAVSKSLA) form a DNA-binding region, H-T-H motif.

It belongs to the LysR transcriptional regulatory family.

Its function is as follows. Involved in anaerobic NO protection. In Salmonella agona (strain SL483), this protein is HTH-type transcriptional regulator YidZ.